The chain runs to 780 residues: Calpain clp-1 (780 aa).

Basic and acidic residues predominate over residues Asp-269–Arg-282. The tract at residues Asp-269 to Pro-300 is disordered. The Calpain catalytic domain occupies Leu-316–Gly-611. Active-site residues include Cys-371, His-527, and Asn-551.

It belongs to the peptidase C2 family. As to expression, expressed in muscle and neuronal tissues. Expressed in the ventral and dorsal nerve cord, intestinal and hypodermal tissues.

It localises to the cytoplasm. The protein resides in the myofibril. Its subcellular location is the sarcomere. The protein localises to the m line. Functionally, calcium-regulated non-lysosomal thiol-protease which catalyzes limited proteolysis of substrates. Required for assembly and maintenance of integrin attachment complexes which are essential for maintenance of adult muscle. Proteolytic activity is activated in response to increased intracellular Ca(2+) levels during cell degeneration and promotes necrotic cell death. This Caenorhabditis elegans protein is Calpain clp-1.